A 565-amino-acid chain; its full sequence is Amino-acid acetyltransferase, mitochondrial (565 aa).

The segment at 38–58 (DIATATPAATPSDGAQPPAQN) is disordered. The 189-residue stretch at 352–540 (LPVRVLRSME…EFGGGRLVRV (189 aa)) folds into the N-acetyltransferase domain.

This sequence belongs to the acetyltransferase family.

It is found in the mitochondrion. It carries out the reaction L-glutamate + acetyl-CoA = N-acetyl-L-glutamate + CoA + H(+). It participates in amino-acid biosynthesis; L-arginine biosynthesis; N(2)-acetyl-L-ornithine from L-glutamate: step 1/4. In terms of biological role, N-acetylglutamate synthase involved in arginine biosynthesis. This is Amino-acid acetyltransferase, mitochondrial (ARG2) from Cryptococcus neoformans var. neoformans serotype D (strain B-3501A) (Filobasidiella neoformans).